A 391-amino-acid chain; its full sequence is Argininosuccinate synthase (391 aa).

Residue 6–14 (AYSGGLDTT) coordinates ATP. An L-citrulline-binding site is contributed by Y84. G114 contacts ATP. T116, N120, and D121 together coordinate L-aspartate. N120 is an L-citrulline binding site. Positions 124, 171, 180, 253, and 265 each coordinate L-citrulline.

Belongs to the argininosuccinate synthase family. Type 1 subfamily. Homotetramer.

The protein localises to the cytoplasm. It catalyses the reaction L-citrulline + L-aspartate + ATP = 2-(N(omega)-L-arginino)succinate + AMP + diphosphate + H(+). It functions in the pathway amino-acid biosynthesis; L-arginine biosynthesis; L-arginine from L-ornithine and carbamoyl phosphate: step 2/3. This chain is Argininosuccinate synthase, found in Sulfolobus acidocaldarius (strain ATCC 33909 / DSM 639 / JCM 8929 / NBRC 15157 / NCIMB 11770).